A 94-amino-acid polypeptide reads, in one-letter code: Large ribosomal subunit protein uL23 (94 aa).

The protein belongs to the universal ribosomal protein uL23 family. Part of the 50S ribosomal subunit. Contacts protein L29, and trigger factor when it is bound to the ribosome.

In terms of biological role, one of the early assembly proteins it binds 23S rRNA. One of the proteins that surrounds the polypeptide exit tunnel on the outside of the ribosome. Forms the main docking site for trigger factor binding to the ribosome. This chain is Large ribosomal subunit protein uL23, found in Phytoplasma australiense.